The following is a 149-amino-acid chain: Nucleoside diphosphate kinase (149 aa).

Residues Lys9, Phe57, Arg85, Thr91, Arg102, and Asn112 each coordinate ATP. The active-site Pros-phosphohistidine intermediate is His115.

The protein belongs to the NDK family. As to quaternary structure, homotetramer. Mg(2+) is required as a cofactor.

It localises to the cytoplasm. It carries out the reaction dZDP + ATP = dZTP + ADP. The catalysed reaction is a 2'-deoxyribonucleoside 5'-diphosphate + ATP = a 2'-deoxyribonucleoside 5'-triphosphate + ADP. The enzyme catalyses a ribonucleoside 5'-diphosphate + ATP = a ribonucleoside 5'-triphosphate + ADP. It functions in the pathway purine metabolism. In terms of biological role, major role in the synthesis of nucleoside triphosphates other than ATP. The ATP gamma phosphate is transferred to the NDP beta phosphate via a ping-pong mechanism, using a phosphorylated active-site intermediate. Its function is as follows. (Microbial infection) Catalyzes the phosphorylation of dZDP to dZTP, when the bacterium is infected by a phage that produces the substrate for the synthesis of dZTP (2- amino-2'-deoxyadenosine 5'-triphosphate), which is then used by the phage as a DNA polymerase substrate. The polypeptide is Nucleoside diphosphate kinase (Picosynechococcus sp. (strain ATCC 27264 / PCC 7002 / PR-6) (Agmenellum quadruplicatum)).